The following is a 497-amino-acid chain: SPI-2 type 3 secretion system secretin (497 aa).

The first 20 residues, 1–20 (MVVNKRLILILLFILNTAKS), serve as a signal peptide directing secretion.

Belongs to the bacterial secretin family. T3SS SctC subfamily. The core secretion machinery of the T3SS is composed of approximately 20 different proteins, including cytoplasmic components, a base, an export apparatus and a needle. This subunit is part of the base, which anchors the injectisome in the bacterial cell envelope. Forms a stable homooligomeric complex.

It localises to the cell outer membrane. In terms of biological role, component of the type III secretion system (T3SS), also called injectisome, which is used to inject bacterial effector proteins into eukaryotic host cells. Forms a ring-shaped multimeric structure with an apparent central pore in the outer membrane. Required for secretion of some type III-secreted effectors including the SpvB exotoxin. This Salmonella typhimurium (strain 14028s / SGSC 2262) protein is SPI-2 type 3 secretion system secretin.